Here is a 465-residue protein sequence, read N- to C-terminus: Phosphatidate cytidylyltransferase (465 aa).

Residues 1–60 (MSDQPPAENADVRQRRAPESPVTERLRAPARDDARPTSDESDMEGILQDEDSDAGSKNKE) are disordered. Positions 10 to 38 (ADVRQRRAPESPVTERLRAPARDDARPTS) are enriched in basic and acidic residues. A compositionally biased stretch (acidic residues) spans 39–53 (DESDMEGILQDEDSD). The next 8 helical transmembrane spans lie at 95 to 117 (WVVR…TRGA), 121 to 143 (MFLV…LAVY), 158 to 178 (FLLT…WGIV), 187 to 207 (FLVA…FVSF), 214 to 234 (GYYM…LLIV), 239 to 259 (FIIQ…AMII), 288 to 308 (GFIG…LALY), and 367 to 387 (IALS…ASGF).

The protein belongs to the CDS family.

It localises to the membrane. The catalysed reaction is a 1,2-diacyl-sn-glycero-3-phosphate + CTP + H(+) = a CDP-1,2-diacyl-sn-glycerol + diphosphate. The protein operates within phospholipid metabolism; CDP-diacylglycerol biosynthesis; CDP-diacylglycerol from sn-glycerol 3-phosphate: step 3/3. In terms of biological role, provides CDP-diacylglycerol, an important precursor for the synthesis of phosphatidylinositol (PtdIns). The polypeptide is Phosphatidate cytidylyltransferase (cdgs-1) (Caenorhabditis elegans).